Reading from the N-terminus, the 342-residue chain is S-adenosylmethionine:tRNA ribosyltransferase-isomerase (342 aa).

The protein belongs to the QueA family. Monomer.

It is found in the cytoplasm. The catalysed reaction is 7-aminomethyl-7-carbaguanosine(34) in tRNA + S-adenosyl-L-methionine = epoxyqueuosine(34) in tRNA + adenine + L-methionine + 2 H(+). The protein operates within tRNA modification; tRNA-queuosine biosynthesis. Transfers and isomerizes the ribose moiety from AdoMet to the 7-aminomethyl group of 7-deazaguanine (preQ1-tRNA) to give epoxyqueuosine (oQ-tRNA). In Streptococcus pyogenes serotype M12 (strain MGAS2096), this protein is S-adenosylmethionine:tRNA ribosyltransferase-isomerase.